The chain runs to 834 residues: DNA polymerase I, thermostable (834 aa).

Residues 176–262 (KPEQWVDFRA…DLPLEVDLAQ (87 aa)) form the 5'-3' exonuclease domain. Positions 412–834 (ERLHRNLLKR…MGEDWLSAKG (423 aa)) are polymerase.

The protein belongs to the DNA polymerase type-A family.

It catalyses the reaction DNA(n) + a 2'-deoxyribonucleoside 5'-triphosphate = DNA(n+1) + diphosphate. In terms of biological role, has 5'-3' exonuclease activity and no 3'-5' exonuclease activity. This Thermus caldophilus protein is DNA polymerase I, thermostable (polA).